A 604-amino-acid chain; its full sequence is 3-hydroxy-3-methylglutaryl-coenzyme A reductase (604 aa).

The segment at 1–31 (MDVRRRSEKPAYPTKEFAAGEKPLKPHKQQQ) is disordered. 2 helical membrane passes run 40–62 (ASDALPLPLYLTNGLFFTMFFSV) and 90–110 (AIASLIASVIYLLGFFGIGFV). Residues 111-189 (QSFVSRDNND…PLVTPAASEE (79 aa)) form a linker region. Residues 190–604 (DEEIIKSVVQ…STKDVTKASS (415 aa)) form a catalytic region. The Charge relay system role is filled by glutamate 283. Asparagine 347 carries N-linked (GlcNAc...) asparagine glycosylation. The active-site Charge relay system is the lysine 415. An N-linked (GlcNAc...) asparagine glycan is attached at asparagine 460. Residue aspartate 491 is the Charge relay system of the active site. Histidine 589 acts as the Proton donor in catalysis. Residue asparagine 593 is glycosylated (N-linked (GlcNAc...) asparagine).

It belongs to the HMG-CoA reductase family. Found in protoplasts and leaves submitted to stress. Low levels found in apexes, anthers and roots.

Its subcellular location is the endoplasmic reticulum membrane. The enzyme catalyses (R)-mevalonate + 2 NADP(+) + CoA = (3S)-3-hydroxy-3-methylglutaryl-CoA + 2 NADPH + 2 H(+). It functions in the pathway metabolic intermediate biosynthesis; (R)-mevalonate biosynthesis; (R)-mevalonate from acetyl-CoA: step 3/3. Catalyzes the synthesis of mevalonate, the specific precursor of all isoprenoid compounds present in plants. Possible role in plant defense mechanisms as well as in the cell cycle. This Nicotiana sylvestris (Wood tobacco) protein is 3-hydroxy-3-methylglutaryl-coenzyme A reductase (HMGR).